The chain runs to 312 residues: Pantothenate kinase (312 aa).

97–104 lines the ATP pocket; the sequence is GSVAVGKS.

This sequence belongs to the prokaryotic pantothenate kinase family.

It localises to the cytoplasm. The enzyme catalyses (R)-pantothenate + ATP = (R)-4'-phosphopantothenate + ADP + H(+). The protein operates within cofactor biosynthesis; coenzyme A biosynthesis; CoA from (R)-pantothenate: step 1/5. In Mycolicibacterium smegmatis (strain ATCC 700084 / mc(2)155) (Mycobacterium smegmatis), this protein is Pantothenate kinase.